The sequence spans 288 residues: MSIITGKTKLLGIIGHPVEHSLSPVMQNAEIKRLGVDYIYIPFPVKPENLETALDGFATIGVMGFNATIPHKQAIIPLLSEVTTTAKLVGAVNTVWRTEIGWKGTNTDVIGFVTPLKALNRDWNTIKPIILGNGGAARAVVVGLAELGCRDICVVGRDKDKLGQFKQSWDTSELQASITVHSWDELSGMVSESQLIVNTTPIGMFPHTQNSPVDSNLWEKLPNNAIAYDLIYNPSPTQFLKDAKQQGLTVIDGLDMLVYQGAAALEIWLQQPVSATVMSEALKQSLFS.

Residues 21–23 (SLS) and Thr-68 each bind shikimate. The active-site Proton acceptor is Lys-72. Residues Asn-93 and Asp-108 each coordinate shikimate. Residues 132–136 (GNGGA) and Leu-230 contribute to the NADP(+) site. Tyr-232 contacts shikimate. NADP(+) is bound at residue Gly-253.

It belongs to the shikimate dehydrogenase family. Homodimer.

The enzyme catalyses shikimate + NADP(+) = 3-dehydroshikimate + NADPH + H(+). It functions in the pathway metabolic intermediate biosynthesis; chorismate biosynthesis; chorismate from D-erythrose 4-phosphate and phosphoenolpyruvate: step 4/7. Functionally, involved in the biosynthesis of the chorismate, which leads to the biosynthesis of aromatic amino acids. Catalyzes the reversible NADPH linked reduction of 3-dehydroshikimate (DHSA) to yield shikimate (SA). In Crocosphaera subtropica (strain ATCC 51142 / BH68) (Cyanothece sp. (strain ATCC 51142)), this protein is Shikimate dehydrogenase (NADP(+)).